Consider the following 122-residue polypeptide: Large ribosomal subunit protein uL14c (122 aa).

The protein belongs to the universal ribosomal protein uL14 family. In terms of assembly, part of the 50S ribosomal subunit.

Its subcellular location is the plastid. The protein resides in the chloroplast. Its function is as follows. Binds to 23S rRNA. This Adiantum capillus-veneris (Maidenhair fern) protein is Large ribosomal subunit protein uL14c.